The primary structure comprises 188 residues: Elongation factor P (188 aa).

It belongs to the elongation factor P family.

Its subcellular location is the cytoplasm. Its pathway is protein biosynthesis; polypeptide chain elongation. Functionally, involved in peptide bond synthesis. Stimulates efficient translation and peptide-bond synthesis on native or reconstituted 70S ribosomes in vitro. Probably functions indirectly by altering the affinity of the ribosome for aminoacyl-tRNA, thus increasing their reactivity as acceptors for peptidyl transferase. The sequence is that of Elongation factor P (efp) from Rickettsia conorii (strain ATCC VR-613 / Malish 7).